The primary structure comprises 490 residues: Dual specificity protein kinase CLK3 (490 aa).

At Y7 the chain carries Phosphotyrosine. Residues S9, S49, S51, S67, S76, and S78 each carry the phosphoserine modification. Residues 22 to 138 are disordered; the sequence is RRRSYSREHE…SKRSSRSVED (117 aa). Basic and acidic residues-rich tracts occupy residues 26-56 and 63-76; these read YSRE…DRLP and EHRD…EDRS. Basic residues predominate over residues 103–116; sequence TRKHAHHCHKRRTR. Residues 117-130 are compositionally biased toward low complexity; it reads SCSSASSRSQQSSK. S135 is modified (phosphoserine). The region spanning 156–472 is the Protein kinase domain; that stretch reads YEIVGNLGEG…LAEALLHPFF (317 aa). ATP contacts are provided by residues 162-170 and K186; that span reads LGEGTFGKV. D283 acts as the Proton acceptor in catalysis.

It belongs to the protein kinase superfamily. CMGC Ser/Thr protein kinase family. Lammer subfamily. Autophosphorylates on all three types of residues.

The protein localises to the nucleus. Its subcellular location is the cytoplasm. The protein resides in the cytoplasmic vesicle. It localises to the secretory vesicle. It is found in the acrosome. It carries out the reaction L-seryl-[protein] + ATP = O-phospho-L-seryl-[protein] + ADP + H(+). The enzyme catalyses L-threonyl-[protein] + ATP = O-phospho-L-threonyl-[protein] + ADP + H(+). The catalysed reaction is L-tyrosyl-[protein] + ATP = O-phospho-L-tyrosyl-[protein] + ADP + H(+). Its activity is regulated as follows. Leucettine L41 inhibits its kinase activity and affects the regulation of alternative splicing mediated by phosphorylation of SR proteins. Its function is as follows. Dual specificity kinase acting on both serine/threonine and tyrosine-containing substrates. Phosphorylates serine- and arginine-rich (SR) proteins of the spliceosomal complex. May be a constituent of a network of regulatory mechanisms that enable SR proteins to control RNA splicing and can cause redistribution of SR proteins from speckles to a diffuse nucleoplasmic distribution. Phosphorylates SRSF1 and SRSF3. Regulates the alternative splicing of tissue factor (F3) pre-mRNA in endothelial cells. In Bos taurus (Bovine), this protein is Dual specificity protein kinase CLK3 (CLK3).